A 26-amino-acid polypeptide reads, in one-letter code: Thrombin-like enzyme LmrSP-3 (26 aa).

The protein belongs to the peptidase S1 family. Snake venom subfamily. Expressed by the venom gland.

It is found in the secreted. Its function is as follows. Thrombin-like snake venom serine protease that cleaves alpha-chain of fibrinogen (FGA) releases only fibrinopeptide A. Shows coagulant, esterase and amidase activities. The polypeptide is Thrombin-like enzyme LmrSP-3 (Lachesis muta rhombeata (Bushmaster)).